Consider the following 221-residue polypeptide: Probable septum site-determining protein MinC (221 aa).

The protein belongs to the MinC family. Interacts with MinD and FtsZ.

Cell division inhibitor that blocks the formation of polar Z ring septums. Rapidly oscillates between the poles of the cell to destabilize FtsZ filaments that have formed before they mature into polar Z rings. Prevents FtsZ polymerization. The chain is Probable septum site-determining protein MinC from Shewanella denitrificans (strain OS217 / ATCC BAA-1090 / DSM 15013).